Here is a 778-residue protein sequence, read N- to C-terminus: General transcription and DNA repair factor IIH helicase subunit XPD/RAD3 (778 aa).

In terms of domain architecture, Helicase ATP-binding spans 7-285; sequence DLPVLFPYPK…KVDSQKLQDE (279 aa). 42 to 49 contacts ATP; sequence MPSGTGKT. Residues cysteine 115, cysteine 133, cysteine 156, and cysteine 191 each contribute to the [4Fe-4S] cluster site. The DEAH box motif lies at 235-238; the sequence is DEAH. Residues 750–765 show a composition bias toward basic and acidic residues; the sequence is SRKDQGGFIENENKEG. The segment at 750–778 is disordered; sequence SRKDQGGFIENENKEGEQDEDEDEDIEMQ. Acidic residues predominate over residues 766–778; that stretch reads EQDEDEDEDIEMQ.

Belongs to the helicase family. RAD3/XPD subfamily. In terms of assembly, component of the 7-subunit TFIIH core complex composed of XPB/SSL2, XPD/RAD3, SSL1, TFB1, TFB2, TFB4 and TFB5, which is active in NER. The core complex associates with the 3-subunit CTD-kinase module TFIIK composed of CCL1, KIN28 and TFB3 to form the 10-subunit holoenzyme (holo-TFIIH) active in transcription. An additionnal subunit, TFB6, plays a role in the dissociation of the SSL2 helicase from TFIIH after transcription initiation. It depends on [4Fe-4S] cluster as a cofactor. The cofactor is Mg(2+).

It localises to the nucleus. It catalyses the reaction Couples ATP hydrolysis with the unwinding of duplex DNA at the replication fork by translocating in the 5'-3' direction. This creates two antiparallel DNA single strands (ssDNA). The leading ssDNA polymer is the template for DNA polymerase III holoenzyme which synthesizes a continuous strand.. The catalysed reaction is ATP + H2O = ADP + phosphate + H(+). ATP-dependent 5'-3' DNA helicase. Component of the general transcription and DNA repair factor IIH (TFIIH) core complex, which is involved in general and transcription-coupled nucleotide excision repair (NER) of damaged DNA and, when complexed to TFIIK, in RNA transcription by RNA polymerase II. In NER, TFIIH acts by opening DNA around the lesion to allow the excision of the damaged oligonucleotide and its replacement by a new DNA fragment. The ATP-dependent helicase activity of XPD/RAD3 is required for DNA opening. In transcription, TFIIH has an essential role in transcription initiation. When the pre-initiation complex (PIC) has been established, TFIIH is required for promoter opening and promoter escape. Phosphorylation of the C-terminal tail (CTD) of the largest subunit of RNA polymerase II by the kinase module TFIIK controls the initiation of transcription. XPD/RAD3 acts by forming a bridge between TFIIK and the core-TFIIH complex. Involved in the maintenance of the fidelity of DNA replication. Has single-stranded DNA-dependent ATPase activity. 5'-3' DNA helicase activity requires ATP (dATP partially substitutes), will unwind over 800 bp dsDNA. Able to unwind an RNA:DNA hybrid. The chain is General transcription and DNA repair factor IIH helicase subunit XPD/RAD3 from Saccharomyces cerevisiae (strain ATCC 204508 / S288c) (Baker's yeast).